The primary structure comprises 558 residues: MDAPPLHANLIPAARGTEPADLVLKNAMLFDAFSCSWEEGDLAIKDGIIVGTGRSYRGIRERDLGGALVVPGLIDAHVHIESSLLVPQEYAHLVAAHGTTTVIADPHEIANIAGKEGIEYMLACRAGLPVDILYMLPSCVPATPADVGGAVLDAGDLAGFPGRDGILGLGEMMNVPGVLGGDPGVLAKLVLSRIRDGHAPHLSGPDLNAYLLSGPDSDHECTTASEAKEKLRCGMYLFVREGSTEKNIAALVPVVTPYTVSRCSFCTDDCHADLLAHSGHIDRCIRTAVAGGLEPELALRMATLSPAERFSLPDRGALAPGRRADFCIVDDPRHFAVKETYSRGRPVAEYAAPQARPPVFAALRCTVPSRDQIRLFGTGRARVIGLVPGQILTESLTFDLDAAALPDISRDLLKLVVCNRYGKGSVGTGIVHGFGFKDGAIAASISHDAHNIVAAGTGDEVILSALTAVIRAGGGMAAVHKKDVTVLPLDCAGLMSTHPAREVIAGLDALSAATRRIGGIDDPFMYLSFLALTVIPALRLTDRGLFDAVAFRDVPVFP.

The protein belongs to the metallo-dependent hydrolases superfamily. Adenine deaminase family. Mn(2+) is required as a cofactor.

The catalysed reaction is adenine + H2O + H(+) = hypoxanthine + NH4(+). The sequence is that of Adenine deaminase from Methanoregula boonei (strain DSM 21154 / JCM 14090 / 6A8).